The following is a 370-amino-acid chain: tRNA-specific 2-thiouridylase MnmA (370 aa).

Residues 11–18 (GMSGGVDS) and methionine 37 contribute to the ATP site. The interval 97–99 (NPD) is interaction with target base in tRNA. The Nucleophile role is filled by cysteine 102. Cysteines 102 and 199 form a disulfide. Residue glycine 126 participates in ATP binding. The tract at residues 149-151 (KDQ) is interaction with tRNA. Residue cysteine 199 is the Cysteine persulfide intermediate of the active site. Residues 307–308 (RY) are interaction with tRNA.

Belongs to the MnmA/TRMU family.

Its subcellular location is the cytoplasm. The enzyme catalyses S-sulfanyl-L-cysteinyl-[protein] + uridine(34) in tRNA + AH2 + ATP = 2-thiouridine(34) in tRNA + L-cysteinyl-[protein] + A + AMP + diphosphate + H(+). Functionally, catalyzes the 2-thiolation of uridine at the wobble position (U34) of tRNA, leading to the formation of s(2)U34. This is tRNA-specific 2-thiouridylase MnmA from Staphylococcus saprophyticus subsp. saprophyticus (strain ATCC 15305 / DSM 20229 / NCIMB 8711 / NCTC 7292 / S-41).